We begin with the raw amino-acid sequence, 102 residues long: MSELSATHFLLLSAALFIIGMVGVLTRRNVLVIFMCIELMLNAVNVSLIGFAWELHQLTGQVFALFVIAIAAAEAVVGLGIVMALTRRTDTVDIDELRQLRE.

3 helical membrane passes run 6–26 (ATHFLLLSAALFIIGMVGVLT), 31–51 (LVIFMCIELMLNAVNVSLIGF), and 62–82 (VFALFVIAIAAAEAVVGLGIV).

This sequence belongs to the complex I subunit 4L family. NDH-1 is composed of 14 different subunits. Subunits NuoA, H, J, K, L, M, N constitute the membrane sector of the complex.

It localises to the cell membrane. The catalysed reaction is a quinone + NADH + 5 H(+)(in) = a quinol + NAD(+) + 4 H(+)(out). NDH-1 shuttles electrons from NADH, via FMN and iron-sulfur (Fe-S) centers, to quinones in the respiratory chain. The immediate electron acceptor for the enzyme in this species is believed to be ubiquinone. Couples the redox reaction to proton translocation (for every two electrons transferred, four hydrogen ions are translocated across the cytoplasmic membrane), and thus conserves the redox energy in a proton gradient. This Thermomicrobium roseum (strain ATCC 27502 / DSM 5159 / P-2) protein is NADH-quinone oxidoreductase subunit K.